Consider the following 340-residue polypeptide: Guanine nucleotide-binding protein G(I)/G(S)/G(T) subunit beta-3 (340 aa).

7 WD repeats span residues 53–83 (GHLAKIYAMHWATDSKLLVSASQDGKLIVWD), 95–125 (LRSSWVMTCAYAPSGNFVACGGLDNMCSIYN), 141–170 (AHTGYLSCCRFLDDNNIVTSSGDTTCALWD), 182–212 (GHTGDCMSLAVSPDYKLFISGACDASAKLWD), 224–254 (GHESDINAICFFPNGEAICTGSDDASCRLFD), 268–298 (SIICGITSVAFSLSGRLLFAGYDDFNCNVWD), and 310–340 (GHDNRVSCLGVTADGMAVATGSWDSFLKIWN).

Belongs to the WD repeat G protein beta family. In terms of assembly, g proteins are composed of 3 units, alpha, beta and gamma. Interacts with RASD2.

Functionally, guanine nucleotide-binding proteins (G proteins) are involved as a modulator or transducer in various transmembrane signaling systems. The beta and gamma chains are required for the GTPase activity, for replacement of GDP by GTP, and for G protein-effector interaction. This chain is Guanine nucleotide-binding protein G(I)/G(S)/G(T) subunit beta-3 (Gnb3), found in Mus musculus (Mouse).